Consider the following 1653-residue polypeptide: Protein TOPAZ1 (1653 aa).

Disordered stretches follow at residues 1 to 88, 212 to 238, 553 to 591, 855 to 893, and 919 to 942; these read MPRA…PGID, GCMH…TDPS, KMKS…KKDR, PNVA…GSMK, and EVTH…SSDL. Basic and acidic residues-rich tracts occupy residues 58–69 and 221–236; these read SGREEVESDKSA and SKSK…DKTD. A compositionally biased stretch (polar residues) spans 561–585; the sequence is RSASEVVSNTTEDTSLTNMTHNLTG. 2 stretches are compositionally biased toward basic and acidic residues: residues 858-877 and 920-942; these read AEEH…KKEP and VTHE…SSDL.

It is found in the cytoplasm. The protein localises to the cytosol. Its function is as follows. Important for normal spermatogenesis and male fertility. Specifically required for progression to the post-meiotic stages of spermatocyte development. Seems to be necessary for normal expression levels of a number of testis-expressed gene transcripts, although its role in this process is unclear. The sequence is that of Protein TOPAZ1 (TOPAZ1) from Bos taurus (Bovine).